Reading from the N-terminus, the 159-residue chain is Cyclic pyranopterin monophosphate synthase (159 aa).

Substrate-binding positions include 74 to 76 (MCH) and 112 to 113 (ME). The active site involves D127.

Belongs to the MoaC family. Homohexamer; trimer of dimers.

The enzyme catalyses (8S)-3',8-cyclo-7,8-dihydroguanosine 5'-triphosphate = cyclic pyranopterin phosphate + diphosphate. The protein operates within cofactor biosynthesis; molybdopterin biosynthesis. Its function is as follows. Catalyzes the conversion of (8S)-3',8-cyclo-7,8-dihydroguanosine 5'-triphosphate to cyclic pyranopterin monophosphate (cPMP). In Helicobacter hepaticus (strain ATCC 51449 / 3B1), this protein is Cyclic pyranopterin monophosphate synthase.